The chain runs to 435 residues: Methionine aminopeptidase 2-2 (435 aa).

Residues 1–92 are disordered; it reads MAAQTTEKLQ…VPVSNLFPNN (92 aa). Low complexity predominate over residues 24 to 33; sequence DAPAAGQAEA. A compositionally biased stretch (acidic residues) spans 34–45; it reads GEAEEDSDDEKD. The segment covering 59 to 73 has biased composition (basic residues); it reads AKKKKRKSKKKKKGG. Histidine 197 is a substrate binding site. Aspartate 217, aspartate 228, and histidine 297 together coordinate a divalent metal cation. Histidine 305 contacts substrate. Positions 330 and 425 each coordinate a divalent metal cation.

It belongs to the peptidase M24A family. Methionine aminopeptidase eukaryotic type 2 subfamily. Requires Co(2+) as cofactor. It depends on Zn(2+) as a cofactor. Mn(2+) is required as a cofactor. The cofactor is Fe(2+).

The protein localises to the cytoplasm. The enzyme catalyses Release of N-terminal amino acids, preferentially methionine, from peptides and arylamides.. In terms of biological role, cotranslationally removes the N-terminal methionine from nascent proteins. The N-terminal methionine is often cleaved when the second residue in the primary sequence is small and uncharged (Met-Ala-, Cys, Gly, Pro, Ser, Thr, or Val). This chain is Methionine aminopeptidase 2-2, found in Aspergillus clavatus (strain ATCC 1007 / CBS 513.65 / DSM 816 / NCTC 3887 / NRRL 1 / QM 1276 / 107).